We begin with the raw amino-acid sequence, 449 residues long: Glucose-6-phosphate isomerase (449 aa).

Glu291 functions as the Proton donor in the catalytic mechanism. Residues His312 and Lys426 contribute to the active site.

This sequence belongs to the GPI family.

The protein localises to the cytoplasm. It catalyses the reaction alpha-D-glucose 6-phosphate = beta-D-fructose 6-phosphate. It participates in carbohydrate biosynthesis; gluconeogenesis. It functions in the pathway carbohydrate degradation; glycolysis; D-glyceraldehyde 3-phosphate and glycerone phosphate from D-glucose: step 2/4. In terms of biological role, catalyzes the reversible isomerization of glucose-6-phosphate to fructose-6-phosphate. The polypeptide is Glucose-6-phosphate isomerase (Streptococcus pyogenes serotype M12 (strain MGAS2096)).